Consider the following 173-residue polypeptide: Co-chaperone protein HscB (173 aa).

Positions 2–74 constitute a J domain; that stretch reads DYFTLLGMPN…LSRAEYMLSL (73 aa).

This sequence belongs to the HscB family. In terms of assembly, interacts with HscA and stimulates its ATPase activity. Interacts with IscU.

Co-chaperone involved in the maturation of iron-sulfur cluster-containing proteins. Seems to help targeting proteins to be folded toward HscA. In Proteus mirabilis (strain HI4320), this protein is Co-chaperone protein HscB.